The primary structure comprises 359 residues: 3-dehydroquinate synthase (359 aa).

NAD(+) is bound by residues 69–74 (DGEKYK), 103–107 (GVVGD), 127–128 (TT), K140, K149, and 167–170 (TLDT). E182, H245, and H262 together coordinate Zn(2+).

The protein belongs to the sugar phosphate cyclases superfamily. Dehydroquinate synthase family. It depends on Co(2+) as a cofactor. Requires Zn(2+) as cofactor. NAD(+) serves as cofactor.

The protein resides in the cytoplasm. It carries out the reaction 7-phospho-2-dehydro-3-deoxy-D-arabino-heptonate = 3-dehydroquinate + phosphate. Its pathway is metabolic intermediate biosynthesis; chorismate biosynthesis; chorismate from D-erythrose 4-phosphate and phosphoenolpyruvate: step 2/7. Catalyzes the conversion of 3-deoxy-D-arabino-heptulosonate 7-phosphate (DAHP) to dehydroquinate (DHQ). The polypeptide is 3-dehydroquinate synthase (Ruthia magnifica subsp. Calyptogena magnifica).